A 920-amino-acid polypeptide reads, in one-letter code: Probable helicase HelY (920 aa).

The 159-residue stretch at Cys26–Thr184 folds into the Helicase ATP-binding domain. Ala39–Thr46 serves as a coordination point for ATP. Positions Asp132–His135 match the DEVH box motif. In terms of domain architecture, Helicase C-terminal spans Glu265–His469.

Belongs to the helicase family. SKI2 subfamily.

In Mycobacterium leprae (strain TN), this protein is Probable helicase HelY (helY).